A 354-amino-acid polypeptide reads, in one-letter code: Protein-arginine kinase (354 aa).

Residues 24 to 254 (IVLSSRIRLA…QQIIQQEKMA (231 aa)) form the Phosphagen kinase C-terminal domain. ATP is bound by residues 27–31 (SSRIR), histidine 92, arginine 125, 176–180 (RASVM), and 207–212 (RGIYGE). Positions 337-342 (RDYRRA) match the RDXXRA motif of the pArg binding pocket involved in allosteric regulation motif.

It belongs to the ATP:guanido phosphotransferase family.

It carries out the reaction L-arginyl-[protein] + ATP = N(omega)-phospho-L-arginyl-[protein] + ADP + H(+). Appears to be allosterically activated by the binding of pArg-containing polypeptides to the pArg-binding pocket localized in the C-terminal domain of McsB. Its function is as follows. Catalyzes the specific phosphorylation of arginine residues in a large number of proteins. Is part of the bacterial stress response system. Protein arginine phosphorylation has a physiologically important role and is involved in the regulation of many critical cellular processes, such as protein homeostasis, motility, competence, and stringent and stress responses, by regulating gene expression and protein activity. This is Protein-arginine kinase from Bacillus anthracis (strain A0248).